Reading from the N-terminus, the 256-residue chain is 5-keto-4-deoxy-D-glucarate aldolase (256 aa).

The active-site Proton acceptor is the His50. Gln151 contributes to the substrate binding site. Glu153 provides a ligand contact to Mg(2+). Positions 178 and 179 each coordinate substrate. Asp179 contacts Mg(2+).

Belongs to the HpcH/HpaI aldolase family. KDGluc aldolase subfamily. As to quaternary structure, homohexamer; trimer of dimers. It depends on Mg(2+) as a cofactor.

It carries out the reaction 5-dehydro-4-deoxy-D-glucarate = 2-hydroxy-3-oxopropanoate + pyruvate. It catalyses the reaction 2-dehydro-3-deoxy-D-glucarate = 2-hydroxy-3-oxopropanoate + pyruvate. It participates in carbohydrate acid metabolism; galactarate degradation; D-glycerate from galactarate: step 2/3. In terms of biological role, catalyzes the reversible retro-aldol cleavage of both 5-keto-4-deoxy-D-glucarate and 2-keto-3-deoxy-D-glucarate to pyruvate and tartronic semialdehyde. The chain is 5-keto-4-deoxy-D-glucarate aldolase from Salmonella paratyphi A (strain ATCC 9150 / SARB42).